Reading from the N-terminus, the 624-residue chain is Pentatricopeptide repeat-containing protein At2g32630 (624 aa).

PPR repeat units lie at residues 153–187 (FEKF…GLSI), 188–222 (DERS…GVKI), 223–257 (TVYS…GIKP), 258–292 (EAYT…GVVY), 293–327 (NKVT…GIES), 328–362 (DVHV…GLSP), 363–397 (SSYT…GVNI), 398–432 (TQVV…GFQA), 433–467 (DVFT…GVKL), 468–502 (STVS…GVQP), 503–537 (NAIT…GMDP), 538–572 (DSYT…GLDQ), and 573–607 (NSVT…GYTI).

The protein belongs to the PPR family. P subfamily.

This is Pentatricopeptide repeat-containing protein At2g32630 from Arabidopsis thaliana (Mouse-ear cress).